We begin with the raw amino-acid sequence, 865 residues long: cGMP-specific 3',5'-cyclic phosphodiesterase (865 aa).

Residue Ser-92 is modified to Phosphoserine. 2 GAF domains span residues Asp-154–Leu-304 and Ser-336–Ile-493. Residues Glu-526–Gln-850 form the PDEase domain. The active-site Proton donor is His-603. Zn(2+) is bound by residues His-607, His-643, Asp-644, and Asp-754. Asp-644 provides a ligand contact to Mg(2+). Position 807 (Gln-807) interacts with 3',5'-cyclic GMP.

The protein belongs to the cyclic nucleotide phosphodiesterase family. It depends on Zn(2+) as a cofactor. Mg(2+) serves as cofactor. In terms of processing, phosphorylation is regulated by binding of cGMP to the two allosteric sites. Phosphorylation by PRKG1 leads to its activation.

It carries out the reaction 3',5'-cyclic GMP + H2O = GMP + H(+). The protein operates within purine metabolism; 3',5'-cyclic GMP degradation; GMP from 3',5'-cyclic GMP: step 1/1. Its activity is regulated as follows. Most potently inhibited by zaprinast and dipyridamole. In terms of biological role, plays a role in signal transduction by regulating the intracellular concentration of cyclic nucleotides. This phosphodiesterase catalyzes the specific hydrolysis of cGMP to 5'-GMP. Specifically regulates nitric-oxide-generated cGMP. This Bos taurus (Bovine) protein is cGMP-specific 3',5'-cyclic phosphodiesterase (PDE5A).